A 78-amino-acid chain; its full sequence is Cytochrome b-c1 complex subunit 10, mitochondrial (78 aa).

Over Met1 to Ser26 the chain is Mitochondrial matrix. The helical transmembrane segment at Tyr27 to Thr46 threads the bilayer. The Mitochondrial intermembrane segment spans residues Glu47–Val78.

It belongs to the UQCR11/QCR10 family. As to quaternary structure, component of the ubiquinol-cytochrome c oxidoreductase (cytochrome b-c1 complex, complex III, CIII), a multisubunit enzyme composed of 10 subunits. The complex is composed of 3 respiratory subunits cytochrome b (COB), cytochrome c1 (CYT1) and Rieske protein (RIP1), 2 core protein subunits COR1 and QCR2, and 5 low-molecular weight protein subunits QCR6, QCR7, QCR8, QCR9 and QCR10. The complex exists as an obligatory dimer and forms supercomplexes (SCs) in the inner mitochondrial membrane with a monomer or a dimer of cytochrome c oxidase (complex IV, CIV), resulting in 2 different assemblies (supercomplexes III(2)IV and III(2)IV(2)).

It localises to the mitochondrion inner membrane. Component of the ubiquinol-cytochrome c oxidoreductase, a multisubunit transmembrane complex that is part of the mitochondrial electron transport chain which drives oxidative phosphorylation. The complex plays an important role in the uptake of multiple carbon sources present in different host niches. The chain is Cytochrome b-c1 complex subunit 10, mitochondrial from Candida albicans (strain SC5314 / ATCC MYA-2876) (Yeast).